A 131-amino-acid polypeptide reads, in one-letter code: Methylglyoxal synthase (131 aa).

The region spanning 1–131 (MKIALIAHDK…GDLDYRKLRK (131 aa)) is the MGS-like domain. Residues H8, K12, 34–37 (TGTT), and 54–55 (SG) contribute to the substrate site. Residue D60 is the Proton donor/acceptor of the active site. H87 serves as a coordination point for substrate.

Belongs to the methylglyoxal synthase family.

The catalysed reaction is dihydroxyacetone phosphate = methylglyoxal + phosphate. Its function is as follows. Catalyzes the formation of methylglyoxal from dihydroxyacetone phosphate. The chain is Methylglyoxal synthase from Bacillus cereus (strain ATCC 14579 / DSM 31 / CCUG 7414 / JCM 2152 / NBRC 15305 / NCIMB 9373 / NCTC 2599 / NRRL B-3711).